A 473-amino-acid chain; its full sequence is Glutamate--tRNA ligase 2 (473 aa).

The short motif at 11–21 (PSPTGYLHIGG) is the 'HIGH' region element. The segment covering 113-133 (KARAEGRPPRYDGRWRDRDPS) has biased composition (basic and acidic residues). The segment at 113-136 (KARAEGRPPRYDGRWRDRDPSEAP) is disordered. The 'KMSKS' region signature appears at 240-244 (KLSKR). Lysine 243 is a binding site for ATP.

It belongs to the class-I aminoacyl-tRNA synthetase family. Glutamate--tRNA ligase type 1 subfamily. As to quaternary structure, monomer.

The protein resides in the cytoplasm. The catalysed reaction is tRNA(Glu) + L-glutamate + ATP = L-glutamyl-tRNA(Glu) + AMP + diphosphate. Functionally, catalyzes the attachment of glutamate to tRNA(Glu) in a two-step reaction: glutamate is first activated by ATP to form Glu-AMP and then transferred to the acceptor end of tRNA(Glu). The protein is Glutamate--tRNA ligase 2 of Brucella canis (strain ATCC 23365 / NCTC 10854 / RM-666).